A 155-amino-acid chain; its full sequence is Histone H2B.4 (155 aa).

The segment covering 1 to 28 (MAPKTKEEKPASEAVEPKAEAKPKAEKA) has biased composition (basic and acidic residues). A disordered region spans residues 1–62 (MAPKTKEEKP…GDKKKKKAKV (62 aa)). A compositionally biased stretch (basic residues) spans 29-40 (PKKKEKKAPAKK). Lys151 participates in a covalent cross-link: Glycyl lysine isopeptide (Lys-Gly) (interchain with G-Cter in ubiquitin).

This sequence belongs to the histone H2B family. The nucleosome is a histone octamer containing two molecules each of H2A, H2B, H3 and H4 assembled in one H3-H4 heterotetramer and two H2A-H2B heterodimers. The octamer wraps approximately 147 bp of DNA. In terms of processing, monoubiquitinated to form H2BK143ub1; may give a specific tag for epigenetic transcriptional activation.

The protein localises to the nucleus. The protein resides in the chromosome. Its function is as follows. Core component of nucleosome. Nucleosomes wrap and compact DNA into chromatin, limiting DNA accessibility to the cellular machineries which require DNA as a template. Histones thereby play a central role in transcription regulation, DNA repair, DNA replication and chromosomal stability. DNA accessibility is regulated via a complex set of post-translational modifications of histones, also called histone code, and nucleosome remodeling. The polypeptide is Histone H2B.4 (Volvox carteri (Green alga)).